A 323-amino-acid polypeptide reads, in one-letter code: Cysteine synthase A (323 aa).

Positions 8 and 35 each coordinate hydrogen sulfide. Position 42 is an N6-(pyridoxal phosphate)lysine (Lys-42). Pyridoxal 5'-phosphate contacts are provided by residues Asn-72 and 177 to 181 (GTGGT). Leu-269 is a binding site for hydrogen sulfide. Pyridoxal 5'-phosphate is bound at residue Ser-273.

This sequence belongs to the cysteine synthase/cystathionine beta-synthase family. Homodimer. The cofactor is pyridoxal 5'-phosphate.

It carries out the reaction O-acetyl-L-serine + hydrogen sulfide = L-cysteine + acetate. Its pathway is amino-acid biosynthesis; L-cysteine biosynthesis; L-cysteine from L-serine: step 2/2. Functionally, two cysteine synthase enzymes are found. Both catalyze the same reaction. Cysteine synthase B can also use thiosulfate in place of sulfide to give cysteine thiosulfonate as a product. This Salmonella typhi protein is Cysteine synthase A (cysK).